Consider the following 142-residue polypeptide: Large ribosomal subunit protein bL19 (142 aa).

It belongs to the bacterial ribosomal protein bL19 family.

Functionally, this protein is located at the 30S-50S ribosomal subunit interface and may play a role in the structure and function of the aminoacyl-tRNA binding site. The sequence is that of Large ribosomal subunit protein bL19 from Psychrobacter cryohalolentis (strain ATCC BAA-1226 / DSM 17306 / VKM B-2378 / K5).